A 370-amino-acid chain; its full sequence is Homospermidine synthase 1 (370 aa).

Belongs to the deoxyhypusine synthase family. Homotetramer. Requires NAD(+) as cofactor. Post-translationally, the N-terminus is blocked. As to expression, expressed in roots.

The enzyme catalyses putrescine + spermidine = sym-homospermidine + propane-1,3-diamine. Its pathway is alkaloid biosynthesis; pyrrolizidine alkaloid biosynthesis. Catalyzes the transfer of an aminobutyl unit from spermidine onto putrescine. The resulting polyamine homospermidine is a precursor in the biosynthesis of pyrrolizidine alkaloids. This Senecio vernalis (Spring groundsel) protein is Homospermidine synthase 1 (HSS1).